Reading from the N-terminus, the 369-residue chain is Phosphoribosyl pyrophosphate synthase-associated protein 2 (369 aa).

Position 1 is an N-acetylmethionine (Met-1). A phosphoserine mark is found at Ser-219, Ser-227, and Ser-233.

The protein belongs to the ribose-phosphate pyrophosphokinase family. In terms of assembly, binds to PRPS1 and PRPS2. In terms of tissue distribution, ubiquitous.

Seems to play a negative regulatory role in 5-phosphoribose 1-diphosphate synthesis. The chain is Phosphoribosyl pyrophosphate synthase-associated protein 2 (Prpsap2) from Rattus norvegicus (Rat).